A 135-amino-acid polypeptide reads, in one-letter code: Transcription antitermination protein NusB (135 aa).

This sequence belongs to the NusB family.

In terms of biological role, involved in transcription antitermination. Required for transcription of ribosomal RNA (rRNA) genes. Binds specifically to the boxA antiterminator sequence of the ribosomal RNA (rrn) operons. This chain is Transcription antitermination protein NusB, found in Bdellovibrio bacteriovorus (strain ATCC 15356 / DSM 50701 / NCIMB 9529 / HD100).